Here is a 113-residue protein sequence, read N- to C-terminus: Protein RALF-like 31 (113 aa).

The first 21 residues, 1 to 21 (MFNSTALVIFAILFLLISADA), serve as a signal peptide directing secretion. Positions 22–58 (FPIPSPNGEIDAMLIRNSIIGEDEDLMPTEISRRVLM) are cleaved as a propeptide — removed in mature form. 2 cysteine pairs are disulfide-bonded: C76–C86 and C98–C104.

This sequence belongs to the plant rapid alkalinization factor (RALF) family. In terms of processing, proteolytically cleaved, probably by S1P, a subtilisin-like serine protease (subtilase).

The protein resides in the secreted. Its function is as follows. Cell signaling peptide that may regulate plant stress, growth, and development. Mediates a rapid alkalinization of extracellular space by mediating a transient increase in the cytoplasmic Ca(2+) concentration leading to a calcium-dependent signaling events through a cell surface receptor and a concomitant activation of some intracellular mitogen-activated protein kinases. This Arabidopsis thaliana (Mouse-ear cress) protein is Protein RALF-like 31 (RALFL31).